The following is a 508-amino-acid chain: Asparagine--tRNA ligase (508 aa).

The protein belongs to the class-II aminoacyl-tRNA synthetase family. As to quaternary structure, homodimer.

It localises to the cytoplasm. The catalysed reaction is tRNA(Asn) + L-asparagine + ATP = L-asparaginyl-tRNA(Asn) + AMP + diphosphate + H(+). The polypeptide is Asparagine--tRNA ligase (Streptococcus suis (strain 05ZYH33)).